We begin with the raw amino-acid sequence, 615 residues long: MLLARMNPQVQPENGGAGPGSEQPPRKRKEVLVVKERNGVQCLLASRDGDEQPRETWGKKIDFLLSVVGFAVDLANVWRFPYLCYKNGGGAFLIPYTLFLIIAGMPLFYMELALGQYNREGAATVWKICPFFKGVGYAVILIALYVGFYYNVIIAWSLYYLFSSFTPTLPWTDCGHAWNSPNCTDPKLLNSSVLGNHTKYSKYKFTPAAEFYERGVLHLHESSGIHDIGLPQWQLLLCLIIVVIVLFFSLWKGVKTSGKVVWITATLPYLVLFVLLVHGITLPGASNGINAYLHIDFYRLKEATVWIDAATQIFFSLGAGFGVLIAFASYNKFDNNCYRDALLTSTINCVTSFISGFAIFSILGYMAHEHKVNIEDVATEGAGLVFILYPEAISTLSGSTFWAIVFFIMLLALGIDSSMGGMEAVITGLADDFQVLKRHRKLFTFAVSFGTFLLALFCITKGGIYVLTLLDTFAAGTSILFAVLMEAIGVSWFYGVDRFSNDIQQMMGFKPGLYWRLCWKFVSPAFLLFVVIVSIINFKPLTYDDYIFPLWANWVGWGIAGSSMVLVPAYIVYKFFSTRGSIRERLAYGITPASEHHLVAQRDIRQFQLQHWLAI.

A disordered region spans residues 1–28 (MLLARMNPQVQPENGGAGPGSEQPPRKR). Residues 1–60 (MLLARMNPQVQPENGGAGPGSEQPPRKRKEVLVVKERNGVQCLLASRDGDEQPRETWGKK) are Cytoplasmic-facing. Residues 61-86 (IDFLLSVVGFAVDLANVWRFPYLCYK) traverse the membrane as a helical segment. Gly69, Ala71, and Val72 together coordinate Na(+). Asp73 serves as a coordination point for (R)-noradrenaline. Residue Asp73 coordinates dopamine. A Na(+)-binding site is contributed by Asn76. Tyr85 and Lys86 together coordinate (R)-noradrenaline. Residues 87 to 90 (NGGG) lie on the Extracellular side of the membrane. A helical membrane pass occupies residues 91–114 (AFLIPYTLFLIIAGMPLFYMELAL). Over 115-133 (GQYNREGAATVWKICPFFK) the chain is Cytoplasmic. Residues 134–164 (GVGYAVILIALYVGFYYNVIIAWSLYYLFSS) traverse the membrane as a helical segment. Residues Ala143 and Gly147 each coordinate (R)-noradrenaline. Ala143 lines the dopamine pocket. Residues 165-231 (FTPTLPWTDC…SSGIHDIGLP (67 aa)) are Extracellular-facing. Residues Cys174 and Cys183 are joined by a disulfide bond. N-linked (GlcNAc...) asparagine glycans are attached at residues Asn182, Asn190, and Asn196. The chain crosses the membrane as a helical span at residues 232–252 (QWQLLLCLIIVVIVLFFSLWK). Over 253–255 (GVK) the chain is Cytoplasmic. A helical transmembrane segment spans residues 256 to 280 (TSGKVVWITATLPYLVLFVLLVHGI). Residues 281–304 (TLPGASNGINAYLHIDFYRLKEAT) lie on the Extracellular side of the membrane. The chain crosses the membrane as a helical span at residues 305–330 (VWIDAATQIFFSLGAGFGVLIAFASY). Phe315 serves as a coordination point for (R)-noradrenaline. Position 315 (Phe315) interacts with dopamine. Residue Ser316 coordinates Na(+). Topologically, residues 331–336 (NKFDNN) are cytoplasmic. The helical transmembrane segment at 337–360 (CYRDALLTSTINCVTSFISGFAIF) threads the bilayer. Asn348 provides a ligand contact to Na(+). The Extracellular segment spans residues 361 to 400 (SILGYMAHEHKVNIEDVATEGAGLVFILYPEAISTLSGST). Glu380 contacts (R)-noradrenaline. Glu380 contacts dopamine. A helical membrane pass occupies residues 401 to 426 (FWAIVFFIMLLALGIDSSMGGMEAVI). Na(+)-binding residues include Asp416 and Ser417. The Cytoplasmic segment spans residues 427–441 (TGLADDFQVLKRHRK). A helical transmembrane segment spans residues 442–462 (LFTFAVSFGTFLLALFCITKG). Position 463 (Gly463) is a topological domain, extracellular. The chain crosses the membrane as a helical span at residues 464–490 (IYVLTLLDTFAAGTSILFAVLMEAIGV). At 491 to 520 (SWFYGVDRFSNDIQQMMGFKPGLYWRLCWK) the chain is on the cytoplasmic side. The helical transmembrane segment at 521–543 (FVSPAFLLFVVIVSIINFKPLTY) threads the bilayer. Topologically, residues 544 to 546 (DDY) are extracellular. A helical membrane pass occupies residues 547–567 (IFPLWANWVGWGIAGSSMVLV). At 568–615 (PAYIVYKFFSTRGSIRERLAYGITPASEHHLVAQRDIRQFQLQHWLAI) the chain is on the cytoplasmic side.

The protein belongs to the sodium:neurotransmitter symporter (SNF) (TC 2.A.22) family. SLC6A2 subfamily. In terms of assembly, monomer. Can form homodimers in the cell membrane; homodimerization is mostly mediated by cholesterol and lipids, and regulates neurotransmitter transport activity. Interacts with PRKCABP. Palmitoylated. Palmitoylation regulates protein levels and neurotransmitter transport.

It is found in the cell membrane. It localises to the cell projection. Its subcellular location is the axon. The protein resides in the synapse. The protein localises to the synaptosome. It carries out the reaction (R)-noradrenaline(out) + chloride(out) + Na(+)(out) = (R)-noradrenaline(in) + chloride(in) + Na(+)(in). The enzyme catalyses dopamine(out) + chloride(out) + Na(+)(out) = dopamine(in) + chloride(in) + Na(+)(in). The catalysed reaction is dopamine(out) + chloride(out) + 2 Na(+)(out) = dopamine(in) + chloride(in) + 2 Na(+)(in). Inhibited by nisoxetine, oxaprotiline and desipramin. Mediates sodium- and chloride-dependent transport of norepinephrine (also known as noradrenaline), the primary signaling neurotransmitter in the autonomic sympathetic nervous system. Is responsible for norepinephrine re-uptake and clearance from the synaptic cleft, thus playing a crucial role in norepinephrine inactivation and homeostasis. Can also mediate sodium- and chloride-dependent transport of dopamine. The protein is Sodium-dependent noradrenaline transporter (SLC6A2) of Bos taurus (Bovine).